The primary structure comprises 311 residues: Replicative helicase loader DnaI (311 aa).

An N-terminal domain (Nd) region spans residues 1–136; that stretch reads MEPIGRSLQG…LGATFQQVDI (136 aa). Zn(2+) contacts are provided by cysteine 67, cysteine 70, histidine 84, and cysteine 101. The interval 137–311 is C-terminal domain (Cd); sequence SDPSRLAMFQ…RLDGENRRHP (175 aa). Residue 168-175 participates in ATP binding; that stretch reads GKFGVGKT.

Belongs to the DnaI family. The DNA replisome assembles sequentially on oriC in this order; DnaA, DnaD, DnaB, DnaI-DnaC helicase. Monomer with a very minor amount of dimer in solution. Interacts with replicative helicase (from G.stearothermophilus, called DnaB); this interaction is disrupted by DnaD. Interacts with replicative helicase DnaC, forms a DnaC(6):DnaI(6) complex. Interacts with the helicase as 3 dimers. A stable complex with DnaG primase, DnaI(6):helicase(6):DnaG(3) fragment can be isolated; DnaI and DnaG do not contact each other (helicase and DnaG in this complex are derived from G.stearothermophilus). The cofactor is Zn(2+).

The protein resides in the cytoplasm. It carries out the reaction ATP + H2O = ADP + phosphate + H(+). In terms of biological role, helps load the DnaC replicative helicase onto single-stranded (ss)DNA and simulates the helicase activity; in the presence of DnaB more helicase activity is seen. Regulates DnaC helicase activity, at low concentrations stimulates the DNA helicase and ATPase activities of DnaC. Has no measurable ATPase activity after 1 hour incubation of 6 uM DnaI with or without DNA. Another group has found the protein has weak ATPase activity that is not stimulated by ssDNA. Whole protein binds forked DNA (but not ssDNA) weakly; ATP and ADPNP (probably 5'-adenylyl beta, gamma-imidodiphosphate) have no effect on DNA binding. DnaB, DnaD and DnaI may be required for a PriA-independent pathway of replication fork restart. The sequence is that of Replicative helicase loader DnaI from Bacillus subtilis (strain 168).